A 164-amino-acid polypeptide reads, in one-letter code: Protein SprT (164 aa).

In terms of domain architecture, SprT-like spans 14-156 (QQAETFFKRP…LCRRCREILV (143 aa)). Position 69 (His69) interacts with Zn(2+). Residue Glu70 is part of the active site. His73 contacts Zn(2+).

It belongs to the SprT family. Requires Zn(2+) as cofactor.

It is found in the cytoplasm. The sequence is that of Protein SprT from Pseudomonas entomophila (strain L48).